A 554-amino-acid polypeptide reads, in one-letter code: 3-(3-hydroxy-phenyl)propionate/3-hydroxycinnamic acid hydroxylase (554 aa).

FAD contacts are provided by residues 17–46 (QVAIAGAGPVGLMMANYLGQMGISVLLVEK) and 285–295 (FRIDRVLLAGD).

This sequence belongs to the PheA/TfdB FAD monooxygenase family. FAD is required as a cofactor.

It carries out the reaction 3-(3-hydroxyphenyl)propanoate + NADH + O2 + H(+) = 3-(2,3-dihydroxyphenyl)propanoate + NAD(+) + H2O. The catalysed reaction is (2E)-3-(3-hydroxyphenyl)prop-2-enoate + NADH + O2 + H(+) = (2E)-3-(2,3-dihydroxyphenyl)prop-2-enoate + NAD(+) + H2O. The protein operates within aromatic compound metabolism; 3-phenylpropanoate degradation. Functionally, catalyzes the insertion of one atom of molecular oxygen into position 2 of the phenyl ring of 3-(3-hydroxyphenyl)propionate (3-HPP) and hydroxycinnamic acid (3HCI). This is 3-(3-hydroxy-phenyl)propionate/3-hydroxycinnamic acid hydroxylase from Klebsiella pneumoniae (strain 342).